Consider the following 257-residue polypeptide: 3-deoxy-manno-octulosonate cytidylyltransferase (257 aa).

It belongs to the KdsB family.

The protein localises to the cytoplasm. It catalyses the reaction 3-deoxy-alpha-D-manno-oct-2-ulosonate + CTP = CMP-3-deoxy-beta-D-manno-octulosonate + diphosphate. Its pathway is nucleotide-sugar biosynthesis; CMP-3-deoxy-D-manno-octulosonate biosynthesis; CMP-3-deoxy-D-manno-octulosonate from 3-deoxy-D-manno-octulosonate and CTP: step 1/1. It functions in the pathway bacterial outer membrane biogenesis; lipopolysaccharide biosynthesis. Activates KDO (a required 8-carbon sugar) for incorporation into bacterial lipopolysaccharide in Gram-negative bacteria. This Xylella fastidiosa (strain M23) protein is 3-deoxy-manno-octulosonate cytidylyltransferase.